We begin with the raw amino-acid sequence, 341 residues long: Phosphoribosylformylglycinamidine cyclo-ligase (341 aa).

This sequence belongs to the AIR synthase family.

The protein resides in the cytoplasm. The catalysed reaction is 2-formamido-N(1)-(5-O-phospho-beta-D-ribosyl)acetamidine + ATP = 5-amino-1-(5-phospho-beta-D-ribosyl)imidazole + ADP + phosphate + H(+). It participates in purine metabolism; IMP biosynthesis via de novo pathway; 5-amino-1-(5-phospho-D-ribosyl)imidazole from N(2)-formyl-N(1)-(5-phospho-D-ribosyl)glycinamide: step 2/2. In Picosynechococcus sp. (strain ATCC 27264 / PCC 7002 / PR-6) (Agmenellum quadruplicatum), this protein is Phosphoribosylformylglycinamidine cyclo-ligase.